Here is a 165-residue protein sequence, read N- to C-terminus: Lipoprotein signal peptidase (165 aa).

3 consecutive transmembrane segments (helical) span residues 9 to 29, 65 to 85, and 100 to 120; these read SFLW…YFVV, WQKY…CYFL, and ALII…GFVV. Residues D121 and D139 contribute to the active site. A helical membrane pass occupies residues 134-154; that stretch reads VFNVADIAISLGAGLMILDAF.

It belongs to the peptidase A8 family.

It is found in the cell inner membrane. The enzyme catalyses Release of signal peptides from bacterial membrane prolipoproteins. Hydrolyzes -Xaa-Yaa-Zaa-|-(S,diacylglyceryl)Cys-, in which Xaa is hydrophobic (preferably Leu), and Yaa (Ala or Ser) and Zaa (Gly or Ala) have small, neutral side chains.. It functions in the pathway protein modification; lipoprotein biosynthesis (signal peptide cleavage). Its function is as follows. This protein specifically catalyzes the removal of signal peptides from prolipoproteins. In Pasteurella multocida (strain Pm70), this protein is Lipoprotein signal peptidase.